A 418-amino-acid polypeptide reads, in one-letter code: Voltage-gated ClC-type chloride channel ClcB (418 aa).

10 consecutive transmembrane segments (helical) span residues 5 to 25 (LLIATVVGILAAFAVAGFRHA), 54 to 74 (LLTPALGGLAAGLLLMGWQKF), 146 to 166 (LWIACGAAAGMAAAYRAPLAG), 168 to 188 (LFIAEVLFGTMMLASLGPVII), 222 to 242 (ALIISTGVLAGLCGPLLLTLM), 258 to 278 (WQLALGGLIVGLLSLFTPAVW), 291 to 311 (APPLLMIIAGIFLCKLFAVLA), 316 to 336 (GAPGGVFTPTLFIGLAIGMLY), 352 to 372 (LLLGLTGMATLLAATTHAPIM), and 380 to 400 (MTGEYQLLPGLLIACVIASVI).

It belongs to the chloride channel (TC 2.A.49) family. ClcB subfamily.

The protein resides in the cell inner membrane. In terms of biological role, probably acts as an electrical shunt for an outwardly-directed proton pump that is linked to amino acid decarboxylation, as part of the extreme acid resistance (XAR) response. This chain is Voltage-gated ClC-type chloride channel ClcB, found in Escherichia coli (strain SMS-3-5 / SECEC).